A 437-amino-acid chain; its full sequence is O-methyltransferase 10 (437 aa).

Residues Gly-259, Glu-282, Asn-315, and Met-316 each coordinate S-adenosyl-L-methionine. Residue His-335 is the Proton acceptor of the active site.

The protein belongs to the class I-like SAM-binding methyltransferase superfamily. Cation-independent O-methyltransferase family. COMT subfamily.

The enzyme catalyses (3,5-dichloro-2,4,6-trihydroxyphenyl)hexan-1-one + S-adenosyl-L-methionine = 1-(3,5-dichloro-2,6-dihydroxy-4-methoxyphenyl)hexan-1-one + S-adenosyl-L-homocysteine + H(+). The chain is O-methyltransferase 10 (omt10) from Dictyostelium discoideum (Social amoeba).